Consider the following 139-residue polypeptide: Large ribosomal subunit protein uL16 (139 aa).

A compositionally biased stretch (basic residues) spans 1-17 (MLIPRRTKHRKQHHPRR). The interval 1–24 (MLIPRRTKHRKQHHPRRTGAASGG) is disordered.

Belongs to the universal ribosomal protein uL16 family. As to quaternary structure, part of the 50S ribosomal subunit.

Functionally, binds 23S rRNA and is also seen to make contacts with the A and possibly P site tRNAs. This chain is Large ribosomal subunit protein uL16, found in Beutenbergia cavernae (strain ATCC BAA-8 / DSM 12333 / CCUG 43141 / JCM 11478 / NBRC 16432 / NCIMB 13614 / HKI 0122).